A 560-amino-acid polypeptide reads, in one-letter code: Membrane protein insertase YidC (560 aa).

6 helical membrane-spanning segments follow: residues 5–25, 334–354, 357–377, 431–451, 476–496, and 522–542; these read IINL…WQYF, AIDF…MNFF, YVGN…LLMF, LPIL…YVTI, LFGL…WPIL, and FMPL…LIYW.

This sequence belongs to the OXA1/ALB3/YidC family. Type 1 subfamily. Interacts with the Sec translocase complex via SecD. Specifically interacts with transmembrane segments of nascent integral membrane proteins during membrane integration.

It is found in the cell inner membrane. Required for the insertion and/or proper folding and/or complex formation of integral membrane proteins into the membrane. Involved in integration of membrane proteins that insert both dependently and independently of the Sec translocase complex, as well as at least some lipoproteins. Aids folding of multispanning membrane proteins. The sequence is that of Membrane protein insertase YidC from Rickettsia prowazekii (strain Madrid E).